Consider the following 152-residue polypeptide: Ribosome maturation factor RimP (152 aa).

It belongs to the RimP family.

The protein resides in the cytoplasm. In terms of biological role, required for maturation of 30S ribosomal subunits. In Pseudomonas putida (strain GB-1), this protein is Ribosome maturation factor RimP.